A 606-amino-acid polypeptide reads, in one-letter code: Aspartate--tRNA(Asp/Asn) ligase (606 aa).

Residue glutamate 177 coordinates L-aspartate. The tract at residues 201-204 (QLFK) is aspartate. Arginine 223 is an L-aspartate binding site. Residues 223 to 225 (RDE) and glutamine 232 each bind ATP. Histidine 461 serves as a coordination point for L-aspartate. ATP is bound at residue glutamate 499. An L-aspartate-binding site is contributed by arginine 506. 551–554 (GLDR) lines the ATP pocket.

Belongs to the class-II aminoacyl-tRNA synthetase family. Type 1 subfamily. In terms of assembly, homodimer.

Its subcellular location is the cytoplasm. The enzyme catalyses tRNA(Asx) + L-aspartate + ATP = L-aspartyl-tRNA(Asx) + AMP + diphosphate. Aspartyl-tRNA synthetase with relaxed tRNA specificity since it is able to aspartylate not only its cognate tRNA(Asp) but also tRNA(Asn). Reaction proceeds in two steps: L-aspartate is first activated by ATP to form Asp-AMP and then transferred to the acceptor end of tRNA(Asp/Asn). This chain is Aspartate--tRNA(Asp/Asn) ligase, found in Prochlorococcus marinus (strain NATL2A).